A 367-amino-acid polypeptide reads, in one-letter code: GDSL esterase/lipase At4g28780 (367 aa).

An N-terminal signal peptide occupies residues 1-28; it reads MSTFLLTWIIMTVALSVTLFLMPQQTNA. Serine 38 functions as the Nucleophile in the catalytic mechanism. The N-linked (GlcNAc...) asparagine glycan is linked to asparagine 119. Catalysis depends on residues aspartate 328 and histidine 331. The N-linked (GlcNAc...) asparagine glycan is linked to asparagine 356.

Belongs to the 'GDSL' lipolytic enzyme family.

Its subcellular location is the secreted. The chain is GDSL esterase/lipase At4g28780 from Arabidopsis thaliana (Mouse-ear cress).